The following is a 211-amino-acid chain: PDR1 up-regulated protein 1 (211 aa).

2 helical membrane-spanning segments follow: residues 45–67 (ISKA…PYAY) and 82–99 (RTIL…NVAA).

The protein belongs to the PUP1 family.

The protein localises to the mitochondrion membrane. Its function is as follows. Mitochondrial protein that contributes to the enhanced virulence of C.glabrata strains that acquired azole resistance. The polypeptide is PDR1 up-regulated protein 1 (Candida glabrata (strain ATCC 2001 / BCRC 20586 / JCM 3761 / NBRC 0622 / NRRL Y-65 / CBS 138) (Yeast)).